A 204-amino-acid chain; its full sequence is Ribonuclease HII (204 aa).

Residues 1–197 (MILGIDEAGR…KNRILNPKLL (197 aa)) form the RNase H type-2 domain. 3 residues coordinate a divalent metal cation: Asp-6, Glu-7, and Asp-103.

The protein belongs to the RNase HII family. Requires Mn(2+) as cofactor. The cofactor is Mg(2+).

The protein resides in the cytoplasm. The catalysed reaction is Endonucleolytic cleavage to 5'-phosphomonoester.. In terms of biological role, endonuclease that specifically degrades the RNA of RNA-DNA hybrids. The sequence is that of Ribonuclease HII from Helicobacter pylori (strain Shi470).